A 149-amino-acid chain; its full sequence is Nascent polypeptide-associated complex subunit beta-2 (149 aa).

An NAC-A/B domain is found at 38 to 103 (DKDNTKLQAE…PKENTLNGLY (66 aa)).

It belongs to the NAC-beta family. Part of the nascent polypeptide-associated complex (NAC), consisting of EGD2 and either EGD1 or BTT1. NAC associates with ribosomes via EGD1 or BTT1.

It is found in the cytoplasm. The protein localises to the nucleus. Functionally, acts as a component of the nascent polypeptide-associated complex (NAC), which promotes mitochondrial protein import by enhancing productive ribosome interactions with the outer mitochondrial membrane. Also blocks the inappropriate interaction of ribosomes translating non-secretory nascent polypeptides with translocation sites in the membrane of the endoplasmic reticulum. BTT1 may act as a transcription factor that exert a negative effect on the expression of several genes that are transcribed by RNA polymerase II. The protein is Nascent polypeptide-associated complex subunit beta-2 (BTT1) of Saccharomyces cerevisiae (strain YJM789) (Baker's yeast).